A 512-amino-acid polypeptide reads, in one-letter code: Maturase K (512 aa).

Belongs to the intron maturase 2 family. MatK subfamily.

Its subcellular location is the plastid. The protein resides in the chloroplast. Functionally, usually encoded in the trnK tRNA gene intron. Probably assists in splicing its own and other chloroplast group II introns. In Zantedeschia aethiopica (White calla lily), this protein is Maturase K.